The sequence spans 332 residues: Ketol-acid reductoisomerase (NADP(+)) (332 aa).

Positions 1–182 (MAVIYYDKDC…GSNRAGVLET (182 aa)) constitute a KARI N-terminal Rossmann domain. NADP(+) is bound by residues 25 to 28 (YGAQ) and 83 to 86 (DTSQ). Residue His-108 is part of the active site. Gly-134 provides a ligand contact to NADP(+). In terms of domain architecture, KARI C-terminal knotted spans 183-328 (TFAEETETDL…AELRSMMSWL (146 aa)). Residues Asp-191, Glu-195, Glu-227, and Glu-231 each contribute to the Mg(2+) site. Ser-252 is a binding site for substrate.

This sequence belongs to the ketol-acid reductoisomerase family. Requires Mg(2+) as cofactor.

The enzyme catalyses (2R)-2,3-dihydroxy-3-methylbutanoate + NADP(+) = (2S)-2-acetolactate + NADPH + H(+). The catalysed reaction is (2R,3R)-2,3-dihydroxy-3-methylpentanoate + NADP(+) = (S)-2-ethyl-2-hydroxy-3-oxobutanoate + NADPH + H(+). It participates in amino-acid biosynthesis; L-isoleucine biosynthesis; L-isoleucine from 2-oxobutanoate: step 2/4. The protein operates within amino-acid biosynthesis; L-valine biosynthesis; L-valine from pyruvate: step 2/4. In terms of biological role, involved in the biosynthesis of branched-chain amino acids (BCAA). Catalyzes an alkyl-migration followed by a ketol-acid reduction of (S)-2-acetolactate (S2AL) to yield (R)-2,3-dihydroxy-isovalerate. In the isomerase reaction, S2AL is rearranged via a Mg-dependent methyl migration to produce 3-hydroxy-3-methyl-2-ketobutyrate (HMKB). In the reductase reaction, this 2-ketoacid undergoes a metal-dependent reduction by NADPH to yield (R)-2,3-dihydroxy-isovalerate. The sequence is that of Ketol-acid reductoisomerase (NADP(+)) from Dehalococcoides mccartyi (strain ATCC BAA-2266 / KCTC 15142 / 195) (Dehalococcoides ethenogenes (strain 195)).